A 199-amino-acid chain; its full sequence is Large ribosomal subunit protein bL25 (199 aa).

The protein belongs to the bacterial ribosomal protein bL25 family. CTC subfamily. In terms of assembly, part of the 50S ribosomal subunit; part of the 5S rRNA/L5/L18/L25 subcomplex. Contacts the 5S rRNA. Binds to the 5S rRNA independently of L5 and L18.

This is one of the proteins that binds to the 5S RNA in the ribosome where it forms part of the central protuberance. The polypeptide is Large ribosomal subunit protein bL25 (Chlorobaculum tepidum (strain ATCC 49652 / DSM 12025 / NBRC 103806 / TLS) (Chlorobium tepidum)).